The sequence spans 227 residues: Isopentenyl-diphosphate Delta-isomerase 1 (227 aa).

Substrate is bound at residue Lys36. The Mg(2+) site is built by His40 and His51. Residues 49–199 enclose the Nudix hydrolase domain; that stretch reads LLHRAFSVFL…EIKITPWFQI (151 aa). Arg70 and Lys74 together coordinate substrate. Cys86 (proton acceptor) is an active-site residue. Ser87 contributes to the substrate binding site. Positions 146 and 148 each coordinate Mg(2+). Glu148 is a catalytic residue. An N6-acetyllysine modification is found at Lys176.

Belongs to the IPP isomerase type 1 family. In terms of assembly, monomer. Requires Mg(2+) as cofactor.

Its subcellular location is the peroxisome. The catalysed reaction is isopentenyl diphosphate = dimethylallyl diphosphate. It functions in the pathway isoprenoid biosynthesis; dimethylallyl diphosphate biosynthesis; dimethylallyl diphosphate from isopentenyl diphosphate: step 1/1. In terms of biological role, catalyzes the 1,3-allylic rearrangement of the homoallylic substrate isopentenyl (IPP) to its highly electrophilic allylic isomer, dimethylallyl diphosphate (DMAPP). The chain is Isopentenyl-diphosphate Delta-isomerase 1 (IDI1) from Bos taurus (Bovine).